A 374-amino-acid chain; its full sequence is Nuclear hormone receptor family member nhr-57 (374 aa).

Positions 7-84 (RKYCSVCHQL…VGMNPEVVQA (78 aa)) form a DNA-binding region, nuclear receptor. NR C4-type zinc fingers lie at residues 10-30 (CSVCHQLGDGYHFGAIACKAC) and 48-67 (CRKKNECVIKMSSRDSCKSC). The NR LBD domain occupies 124–374 (QMTPTLCGVM…DKIYKIIDGQ (251 aa)).

It belongs to the nuclear hormone receptor family.

The protein resides in the nucleus. Orphan nuclear receptor. This is Nuclear hormone receptor family member nhr-57 (nhr-57) from Caenorhabditis elegans.